The chain runs to 555 residues: Chaperonin GroEL (555 aa).

ATP contacts are provided by residues T29 to P32, K50, D86 to T90, G418, and D499. The disordered stretch occupies residues H528–F555. The segment covering R537 to F555 has biased composition (gly residues).

Belongs to the chaperonin (HSP60) family. Forms a cylinder of 14 subunits composed of two heptameric rings stacked back-to-back. Interacts with the co-chaperonin GroES.

It is found in the cytoplasm. It carries out the reaction ATP + H2O + a folded polypeptide = ADP + phosphate + an unfolded polypeptide.. Functionally, together with its co-chaperonin GroES, plays an essential role in assisting protein folding. The GroEL-GroES system forms a nano-cage that allows encapsulation of the non-native substrate proteins and provides a physical environment optimized to promote and accelerate protein folding. The protein is Chaperonin GroEL of Orientia tsutsugamushi (strain Ikeda) (Rickettsia tsutsugamushi).